We begin with the raw amino-acid sequence, 244 residues long: ATP-dependent dethiobiotin synthetase BioD 1 (244 aa).

Residue 12-17 coordinates ATP; sequence NVGKTV. Mg(2+) is bound at residue Thr16. Lys37 is an active-site residue. Asp68 serves as a coordination point for ATP. Mg(2+) contacts are provided by Asp68 and Glu126. ATP contacts are provided by residues 186–187, 215–217, and Glu222; these read NR and PYL.

It belongs to the dethiobiotin synthetase family. In terms of assembly, homodimer. Requires Mg(2+) as cofactor.

It is found in the cytoplasm. The catalysed reaction is (7R,8S)-7,8-diammoniononanoate + CO2 + ATP = (4R,5S)-dethiobiotin + ADP + phosphate + 3 H(+). The protein operates within cofactor biosynthesis; biotin biosynthesis; biotin from 7,8-diaminononanoate: step 1/2. Catalyzes a mechanistically unusual reaction, the ATP-dependent insertion of CO2 between the N7 and N8 nitrogen atoms of 7,8-diaminopelargonic acid (DAPA, also called 7,8-diammoniononanoate) to form a ureido ring. This chain is ATP-dependent dethiobiotin synthetase BioD 1, found in Pasteurella multocida (strain Pm70).